We begin with the raw amino-acid sequence, 466 residues long: GTPase Der (466 aa).

2 consecutive EngA-type G domains span residues Pro3 to Pro167 and Pro176 to Met350. GTP contacts are provided by residues Gly9 to Ser16, Asp56 to Phe60, Asn119 to Glu122, Gly182 to Ser189, Asp229 to Leu233, and Asn294 to Asp297. The 85-residue stretch at Ala351 to Arg435 folds into the KH-like domain. The segment at Thr433 to Gly466 is disordered. The span at Arg453–Gly466 shows a compositional bias: basic residues.

This sequence belongs to the TRAFAC class TrmE-Era-EngA-EngB-Septin-like GTPase superfamily. EngA (Der) GTPase family. As to quaternary structure, associates with the 50S ribosomal subunit.

GTPase that plays an essential role in the late steps of ribosome biogenesis. In Nitrosospira multiformis (strain ATCC 25196 / NCIMB 11849 / C 71), this protein is GTPase Der.